Reading from the N-terminus, the 548-residue chain is Chaperonin GroEL (548 aa).

ATP-binding positions include 30–33 (TLGP), Lys51, 87–91 (DGTTT), Gly415, 479–481 (NAA), and Asp495.

The protein belongs to the chaperonin (HSP60) family. In terms of assembly, forms a cylinder of 14 subunits composed of two heptameric rings stacked back-to-back. Interacts with the co-chaperonin GroES.

It is found in the cytoplasm. The catalysed reaction is ATP + H2O + a folded polypeptide = ADP + phosphate + an unfolded polypeptide.. Together with its co-chaperonin GroES, plays an essential role in assisting protein folding. The GroEL-GroES system forms a nano-cage that allows encapsulation of the non-native substrate proteins and provides a physical environment optimized to promote and accelerate protein folding. This is Chaperonin GroEL from Lawsonia intracellularis (strain PHE/MN1-00).